Reading from the N-terminus, the 560-residue chain is Membrane protein insertase YidC (560 aa).

Residues 7–27 (ILIVALAIVSYVMVLKWNQDY) traverse the membrane as a helical segment. Polar residues predominate over residues 38–56 (ASSTTTSGLPDTATGNNAA). Residues 38–76 (ASSTTTSGLPDTATGNNAAASDDIPRAASDTSAPAETPV) form a disordered region. Transmembrane regions (helical) follow at residues 367–387 (IVGNWGWSIIFLTMLIKGIFF), 437–457 (LGGCLPILVQMPVFLSLYWVL), 468–488 (FMLWITDLSIKDPFFILPIIM), and 515–535 (PIIFTFFFLWFPAGLVLYWVV).

It belongs to the OXA1/ALB3/YidC family. Type 1 subfamily. Interacts with the Sec translocase complex via SecD. Specifically interacts with transmembrane segments of nascent integral membrane proteins during membrane integration.

Its subcellular location is the cell inner membrane. Its function is as follows. Required for the insertion and/or proper folding and/or complex formation of integral membrane proteins into the membrane. Involved in integration of membrane proteins that insert both dependently and independently of the Sec translocase complex, as well as at least some lipoproteins. Aids folding of multispanning membrane proteins. This chain is Membrane protein insertase YidC, found in Pseudomonas fluorescens (strain Pf0-1).